An 836-amino-acid chain; its full sequence is MIPFLPMFSLLLLLIVNPINANNHYDKILAHSRIRGRDQGPNVCALQQILGTKKKYFSTCKNWYKKSICGQKTTVLYECCPGYMRMEGMKGCPAVLPIDHVYGTLGIVGATTTQRYSDASKLREEIEGKGSFTYFAPSNEAWDNLDSDIRRGLESNVNVELLNALHSHMINKRMLTKDLKNGMIIPSMYNNLGLFINHYPNGVVTVNCARIIHGNQIATNGVVHVIDRVLTQIGTSIQDFIEAEDDLSSFRAAAITSDILEALGRDGHFTLFAPTNEAFEKLPRGVLERIMGDKVASEALMKYHILNTLQCSESIMGGAVFETLEGNTIEIGCDGDSITVNGIKMVNKKDIVTNNGVIHLIDQVLIPDSAKQVIELAGKQQTTFTDLVAQLGLASALRPDGEYTLLAPVNNAFSDDTLSMDQRLLKLILQNHILKVKVGLNELYNGQILETIGGKQLRVFVYRTAVCIENSCMEKGSKQGRNGAIHIFREIIKPAEKSLHEKLKQDKRFSTFLSLLEAADLKELLTQPGDWTLFVPTNDAFKGMTSEEKEILIRDKNALQNIILYHLTPGVFIGKGFEPGVTNILKTTQGSKIFLKEVNDTLLVNELKSKESDIMTTNGVIHVVDKLLYPADTPVGNDQLLEILNKLIKYIQIKFVRGSTFKEIPVTVYTTKIITKVVEPKIKVIEGSLQPIIKTEGPTLTKVKIEGEPEFRLIKEGETITEVIHGEPIIKKYTKIIDGVPVEITEKETREERIITGPEIKYTRISTGGGETEETLKKLLQEEVTKVTKFIEGGDGHLFEDEEIKRLLQGDTPVRKLQANKKVQGSRRRLREGRSQ.

Positions 1–21 are cleaved as a signal peptide; sequence MIPFLPMFSLLLLLIVNPINA. The EMI domain maps to 40 to 94; the sequence is GPNVCALQQILGTKKKYFSTCKNWYKKSICGQKTTVLYECCPGYMRMEGMKGCPA. Cystine bridges form between C44–C80, C69–C333, C79–C92, C208–C311, and C467–C472. C60 carries the S-cysteinyl cysteine modification. FAS1 domains are found at residues 97–230, 234–365, 368–492, and 496–628; these read PIDH…DRVL, GTSI…DQVL, DSAK…REII, and EKSL…DKLL. N-linked (GlcNAc...) asparagine glycosylation occurs at N599.

Homodimer. Interacts with BMP1 and fibronectin. Gamma-carboxylation is controversial. Gamma-carboxyglutamated; gamma-carboxyglutamate residues are formed by vitamin K dependent carboxylation; this may be required for calcium binding. According to a more recent report, does not contain vitamin K-dependent gamma-carboxyglutamate residues. As to expression, widely expressed with highest levels in aorta, stomach, lower gastrointestinal tract, placenta, uterus, thyroid tissue and breast. Expressed in the kidney. Expressed in the lung. Up-regulated in epithelial ovarian tumors. Not expressed in normal ovaries. Also highly expressed at the tumor periphery of lung carcinoma tissue but not within the tumor. Overexpressed in breast cancers.

Its subcellular location is the golgi apparatus. It is found in the secreted. It localises to the extracellular space. The protein localises to the extracellular matrix. Its function is as follows. Induces cell attachment and spreading and plays a role in cell adhesion. Enhances incorporation of BMP1 in the fibronectin matrix of connective tissues, and subsequent proteolytic activation of lysyl oxidase LOX. The polypeptide is Periostin (POSTN) (Homo sapiens (Human)).